A 426-amino-acid chain; its full sequence is MTQMTDAKSGIITEEMKFVANEEGMDVETLKNLIAKGYVVIPKNVNRNTKPVGIGDNLRTKVNVNLGTSPDFVDIACELKKVEISNKYGADAIMDLSTGGNLPEIRKEIIKNTNLPIGTVPIYEVGVDAKQKYGRVIDMDEDLIFNVIERQAKEGVDFMTLHCGITKQTVNALNNDPRKMGVVSRGGAFLTAYIMYHDRENPLYKEFDYLLELLKEHDVTLSLGDGMRPGCLQDNTDRAQIQELITLGELVDKCREQGVQVMVEGPGHVPYNNIEANMKIQKTVCKNAPFYVLGPIVTDLAPGYDHITAAIGGTLAAVSGANFLCYVTPAEHVRLMKEDDVKEGLIASKIAAQAADVAKGHSIAWKLEKEMADARIKHDWDRQFEIALDSDKPRKMREEIPSKDEKACSVCGDYCALLMVEELGKR.

Substrate-binding positions include Asn65, Met94, Tyr123, His162, 184–186 (SRG), 225–228 (DGMR), and Glu264. His268 lines the Zn(2+) pocket. A substrate-binding site is contributed by Tyr291. A Zn(2+)-binding site is contributed by His332. The [4Fe-4S] cluster site is built by Cys408, Cys411, and Cys415.

Belongs to the ThiC family. [4Fe-4S] cluster is required as a cofactor.

It catalyses the reaction 5-amino-1-(5-phospho-beta-D-ribosyl)imidazole + S-adenosyl-L-methionine = 4-amino-2-methyl-5-(phosphooxymethyl)pyrimidine + CO + 5'-deoxyadenosine + formate + L-methionine + 3 H(+). It participates in cofactor biosynthesis; thiamine diphosphate biosynthesis. Catalyzes the synthesis of the hydroxymethylpyrimidine phosphate (HMP-P) moiety of thiamine from aminoimidazole ribotide (AIR) in a radical S-adenosyl-L-methionine (SAM)-dependent reaction. This is Phosphomethylpyrimidine synthase from Methanococcus maripaludis (strain C7 / ATCC BAA-1331).